We begin with the raw amino-acid sequence, 345 residues long: GTPase Obg (345 aa).

Residues 1–159 enclose the Obg domain; it reads MRFIDEASIT…FHLKLELKLL (159 aa). An OBG-type G domain is found at 160–329; that stretch reads ADVGIVGLPN…LIQILARQIA (170 aa). GTP is bound by residues 166-173, 191-195, 213-216, 283-286, and 310-312; these read GLPNAGKS, FTTLT, DIPG, NKID, and SAA. Residues S173 and T193 each coordinate Mg(2+).

The protein belongs to the TRAFAC class OBG-HflX-like GTPase superfamily. OBG GTPase family. In terms of assembly, monomer. Requires Mg(2+) as cofactor.

Its subcellular location is the cytoplasm. In terms of biological role, an essential GTPase which binds GTP, GDP and possibly (p)ppGpp with moderate affinity, with high nucleotide exchange rates and a fairly low GTP hydrolysis rate. Plays a role in control of the cell cycle, stress response, ribosome biogenesis and in those bacteria that undergo differentiation, in morphogenesis control. The protein is GTPase Obg of Desulforapulum autotrophicum (strain ATCC 43914 / DSM 3382 / VKM B-1955 / HRM2) (Desulfobacterium autotrophicum).